Reading from the N-terminus, the 331-residue chain is Phosphoribosylformylglycinamidine cyclo-ligase (331 aa).

This sequence belongs to the AIR synthase family.

Its subcellular location is the cytoplasm. The catalysed reaction is 2-formamido-N(1)-(5-O-phospho-beta-D-ribosyl)acetamidine + ATP = 5-amino-1-(5-phospho-beta-D-ribosyl)imidazole + ADP + phosphate + H(+). The protein operates within purine metabolism; IMP biosynthesis via de novo pathway; 5-amino-1-(5-phospho-D-ribosyl)imidazole from N(2)-formyl-N(1)-(5-phospho-D-ribosyl)glycinamide: step 2/2. This chain is Phosphoribosylformylglycinamidine cyclo-ligase, found in Clostridium botulinum (strain ATCC 19397 / Type A).